We begin with the raw amino-acid sequence, 272 residues long: Ribosomal RNA small subunit methyltransferase A (272 aa).

The S-adenosyl-L-methionine site is built by Asn-15, Ile-17, Gly-42, Glu-64, Asp-90, and Asn-109.

It belongs to the class I-like SAM-binding methyltransferase superfamily. rRNA adenine N(6)-methyltransferase family. RsmA subfamily.

The protein localises to the cytoplasm. It carries out the reaction adenosine(1518)/adenosine(1519) in 16S rRNA + 4 S-adenosyl-L-methionine = N(6)-dimethyladenosine(1518)/N(6)-dimethyladenosine(1519) in 16S rRNA + 4 S-adenosyl-L-homocysteine + 4 H(+). In terms of biological role, specifically dimethylates two adjacent adenosines (A1518 and A1519) in the loop of a conserved hairpin near the 3'-end of 16S rRNA in the 30S particle. May play a critical role in biogenesis of 30S subunits. The polypeptide is Ribosomal RNA small subunit methyltransferase A (Wolbachia sp. subsp. Drosophila simulans (strain wRi)).